Here is a 362-residue protein sequence, read N- to C-terminus: Holliday junction branch migration complex subunit RuvB (362 aa).

Positions 1–183 (MADSSLVGGG…FGFTGHLEFY (183 aa)) are large ATPase domain (RuvB-L). Residues Leu22, Arg23, Gly64, Lys67, Thr68, Thr69, 130-132 (EDF), Arg173, Tyr183, and Arg220 contribute to the ATP site. Thr68 contacts Mg(2+). A small ATPAse domain (RuvB-S) region spans residues 184 to 254 (SVEELELVLR…TASAALDMYE (71 aa)). The tract at residues 257 to 362 (KRGLDRLDRS…PVAEWLPNGQ (106 aa)) is head domain (RuvB-H). Positions 312 and 317 each coordinate DNA.

It belongs to the RuvB family. Homohexamer. Forms an RuvA(8)-RuvB(12)-Holliday junction (HJ) complex. HJ DNA is sandwiched between 2 RuvA tetramers; dsDNA enters through RuvA and exits via RuvB. An RuvB hexamer assembles on each DNA strand where it exits the tetramer. Each RuvB hexamer is contacted by two RuvA subunits (via domain III) on 2 adjacent RuvB subunits; this complex drives branch migration. In the full resolvosome a probable DNA-RuvA(4)-RuvB(12)-RuvC(2) complex forms which resolves the HJ.

The protein resides in the cytoplasm. It carries out the reaction ATP + H2O = ADP + phosphate + H(+). Functionally, the RuvA-RuvB-RuvC complex processes Holliday junction (HJ) DNA during genetic recombination and DNA repair, while the RuvA-RuvB complex plays an important role in the rescue of blocked DNA replication forks via replication fork reversal (RFR). RuvA specifically binds to HJ cruciform DNA, conferring on it an open structure. The RuvB hexamer acts as an ATP-dependent pump, pulling dsDNA into and through the RuvAB complex. RuvB forms 2 homohexamers on either side of HJ DNA bound by 1 or 2 RuvA tetramers; 4 subunits per hexamer contact DNA at a time. Coordinated motions by a converter formed by DNA-disengaged RuvB subunits stimulates ATP hydrolysis and nucleotide exchange. Immobilization of the converter enables RuvB to convert the ATP-contained energy into a lever motion, pulling 2 nucleotides of DNA out of the RuvA tetramer per ATP hydrolyzed, thus driving DNA branch migration. The RuvB motors rotate together with the DNA substrate, which together with the progressing nucleotide cycle form the mechanistic basis for DNA recombination by continuous HJ branch migration. Branch migration allows RuvC to scan DNA until it finds its consensus sequence, where it cleaves and resolves cruciform DNA. The sequence is that of Holliday junction branch migration complex subunit RuvB from Arthrobacter sp. (strain FB24).